A 927-amino-acid polypeptide reads, in one-letter code: Nonsense-mediated mRNA decay factor SMG8 (927 aa).

3 disordered regions span residues 543–581 (NTGKSGAPQDEDAGEDEAEEEEGQERELPTKKQLQNTAS), 611–636 (QARSEQLSNSEQNTTRSGSSSVDTEN), and 643–662 (QEPAKKEAREDVGPTDAVST). The segment covering 551-566 (QDEDAGEDEAEEEEGQ) has biased composition (acidic residues). The span at 613–633 (RSEQLSNSEQNTTRSGSSSVD) shows a compositional bias: polar residues. The segment covering 644–654 (EPAKKEAREDV) has biased composition (basic and acidic residues).

Belongs to the SMG8 family.

Involved in nonsense-mediated decay (NMD) of mRNAs containing premature stop codons. Probable component of kinase complex containing nonC and recruited to stalled ribosomes. This is Nonsense-mediated mRNA decay factor SMG8 from Drosophila sechellia (Fruit fly).